The chain runs to 1045 residues: MEPWVPQWPPPSRGRPRSPVPDSERGLQRDGYHRPAPHSWHNGERLPQWQDVQGSPQPQQDPRAGPQRPQHVPRLGAWQQHAPAVDYYEGGHRGQLYSRPSYESLYPALTEDYAYGSHYYHGHPQWQQEGRVPRQGSPYVWHDSYRDQRHLSEHRPENQSRTFRRDSETQFQRSNRRNPHKDGPASSSGQERPGELFAEGRLSWGLTSQPSLGSKSNLLQQREVGLSSSSYELSQYMVDAPELYDPAAAAGWRPVPAEDIPVAGPKAPKKFYIPHVSVGFGPRGQLVCVSPSSPMDGQTALVEVHSMEVILNDLEEQEEMRSFPGPLIREDVHKVDVMTFCQQKAAQSRKSGTPGGRDSALLWQLLVLLCRQNGSMAGSDIAELLLQDCKKLEKYKKQPPVANLINLADEDWPVLSSGPRNLLTGETPPSVETPAQVVGKFTQLLYYGRKKEALEWAMKNHLWGHALFLSSKMEPRTYKWVMSGFTSTLALNDPLQTLFQLLSGRIPQAATCCGDTQWGDWRPHLAVILSNQAGDPELRRRVIVSMGDTLASKGLVEAAHFCYLMAQVPFGHYTVNADRLALLGSSHSQEFPRFASAEAIQRTEVLEYCRTLGGRPGLIASFQVYKLLYASRLADYGLASQAFHYCEAIGTAVLSQAESSHPVLLVELIKLAERLKLADPLVLERRGGDEAWEPDWLQRLRRHQELQQKAAADAGEPHSANLDTPGATGTTESTFYQDLPAYQRFSDAPGCEPAPWPTPTQTGCPSPFPSQPGPAAGPAGAPVPLYSVPETHFPVSTEEPQAVGGQVWEDTRQTHSAPGENIASPETFQEPEGLEVISTPQELLAPRAQSFSESCPGSVKEADEESSDEAGRKSARSPAHTGKLADATASAKRSGFGWFSWFRSKPTENAPHSGDEDSSDSPDSEQENPRAPSPREAGLGLSPPPLLESPPLPGASAFGGGTGRGEAQGAMSSQETAAGTGTGGLSGPESASSELYSNPSVLLPPPSVKGAVPLYNPSQVPQLPTAAGLSRPNRLAQRRYPTQPC.

The segment covering 1-13 (MEPWVPQWPPPSR) has biased composition (pro residues). The segment at 1-78 (MEPWVPQWPP…PQHVPRLGAW (78 aa)) is disordered. The segment covering 22–33 (DSERGLQRDGYH) has biased composition (basic and acidic residues). The segment covering 50–60 (QDVQGSPQPQQ) has biased composition (polar residues). Phosphoserine is present on residues serine 55 and serine 137. Residues 149–168 (RHLSEHRPENQSRTFRRDSE) show a composition bias toward basic and acidic residues. 4 disordered regions span residues 149 to 193 (RHLS…QERP), 707 to 733 (QQKA…TTES), 748 to 789 (APGC…YSVP), and 813 to 1045 (QTHS…TQPC). A Phosphoserine modification is found at serine 186. A central conserved domain (CCD); required for localization to endoplasmic reticulum exit sites region spans residues 267 to 711 (APKKFYIPHV…RHQELQQKAA (445 aa)). The span at 773 to 784 (GPAAGPAGAPVP) shows a compositional bias: low complexity. 4 positions are modified to phosphoserine: serine 852, serine 858, serine 866, and serine 867. A compositionally biased stretch (acidic residues) spans 916 to 926 (EDSSDSPDSEQ). A compositionally biased stretch (pro residues) spans 942–953 (SPPPLLESPPLP). Gly residues predominate over residues 957–966 (AFGGGTGRGE). The segment covering 989 to 998 (ESASSELYSN) has biased composition (polar residues).

This sequence belongs to the SEC16 family. In terms of assembly, SEC16A and SEC16B are each present in multiple copies in a heteromeric complex. Interacts with TFG. Interacts with SEC13. As to expression, liver.

It is found in the endoplasmic reticulum membrane. The protein resides in the golgi apparatus membrane. Plays a role in the organization of the endoplasmic reticulum exit sites (ERES), also known as transitional endoplasmic reticulum (tER). Required for secretory cargo traffic from the endoplasmic reticulum to the Golgi apparatus. Involved in peroxisome biogenesis. Regulates the transport of peroxisomal biogenesis factors PEX3 and PEX16 from the ER to peroxisomes. This chain is Protein transport protein Sec16B (SEC16B), found in Oryctolagus cuniculus (Rabbit).